Reading from the N-terminus, the 357-residue chain is MKGVLLSGGTGSRLRPITHTGPKQLVPVANKPVLEYAVEDLKEAGITEIGVILGHKGREEIQNLLGDGSDYGVEITYIVQGNPLGLAHAAGCAKDFVGDDDFVMYLGDNILKEGVVDLVESFESGDFGAGIALQEVENPQQFGIADVDDQGNVTQLIEKPDEPPTNLALIGMYVFSPAVFDAIEQLEPSWRGELEITDAIQSLLEDGYAIDSHVVEGWWKDTGKPEDILEANQLVLEDKSLKKRGTVSDDATVDGRIELAESATIEDGAVVRGPVSIADGAVIKSGTYVGPYTSVGPNSTLEGVHIENSVVIGESSINTSGRIVDSLLGKGANIGSADDFLPEGRRLVVGENSQLKL.

Mg(2+) is bound by residues Asp108 and Asp221.

The protein belongs to the glucose-1-phosphate thymidylyltransferase family. The cofactor is Mg(2+).

Its pathway is protein modification; protein glycosylation. It functions in the pathway cell surface structure biogenesis; S-layer biogenesis. Functionally, nucleotidyltransferase involved in N-glycan biosynthetic pathway that takes place under low-salt conditions (1.75 M instead of 3.4 M). Participates in the formation of the tetrasaccharide present at 'Asn-532' of S-layer glycoprotein Csg, consisting of a sulfated hexose, 2 hexoses and rhamnose. Involved in the addition of final rhamnose (sugar 4) of the tetrasaccharide on the dolichol phosphate carrier. The protein is Low-salt glycan biosynthesis nucleotidyltransferase Agl11 (agl11) of Haloferax volcanii (strain ATCC 29605 / DSM 3757 / JCM 8879 / NBRC 14742 / NCIMB 2012 / VKM B-1768 / DS2) (Halobacterium volcanii).